The chain runs to 273 residues: Thiazole synthase (273 aa).

Lys-110 functions as the Schiff-base intermediate with DXP in the catalytic mechanism. 1-deoxy-D-xylulose 5-phosphate-binding positions include Gly-171, 198–199 (AG), and 220–221 (NS).

It belongs to the ThiG family. As to quaternary structure, homotetramer. Forms heterodimers with either ThiH or ThiS.

Its subcellular location is the cytoplasm. The catalysed reaction is [ThiS sulfur-carrier protein]-C-terminal-Gly-aminoethanethioate + 2-iminoacetate + 1-deoxy-D-xylulose 5-phosphate = [ThiS sulfur-carrier protein]-C-terminal Gly-Gly + 2-[(2R,5Z)-2-carboxy-4-methylthiazol-5(2H)-ylidene]ethyl phosphate + 2 H2O + H(+). Its pathway is cofactor biosynthesis; thiamine diphosphate biosynthesis. Its function is as follows. Catalyzes the rearrangement of 1-deoxy-D-xylulose 5-phosphate (DXP) to produce the thiazole phosphate moiety of thiamine. Sulfur is provided by the thiocarboxylate moiety of the carrier protein ThiS. In vitro, sulfur can be provided by H(2)S. The sequence is that of Thiazole synthase from Hydrogenovibrio crunogenus (strain DSM 25203 / XCL-2) (Thiomicrospira crunogena).